Reading from the N-terminus, the 69-residue chain is Conotoxin Fr3.1 (69 aa).

A signal peptide spans 1-20; sequence MLKTGVLLLIFLVLFPLATL. The propeptide occupies 21–51; the sequence is QDADQPVERNVENKQDLNLDKRRGMKLLAQR. Residue Gln-52 is modified to Pyrrolidone carboxylic acid. Position 54 is a 4-carboxyglutamate (Glu-54). Pro-58 carries the 4-hydroxyproline modification.

This sequence belongs to the conotoxin M superfamily. In terms of tissue distribution, expressed by the venom duct.

The protein localises to the secreted. Functionally, probable toxin. This Conus frigidus (Frigid cone) protein is Conotoxin Fr3.1.